The primary structure comprises 497 residues: MSKRPSISFSEFEVPQKGVAVVLVAKGGGFADEAAKAVGDAEKIARIADISGFTGALGKTAEAIETTPAGVEKIVLVGVGEPGKLGNDDWLKIGGAAFSQIGNAERVTLTLALPETTIAGDEAADVALGMVLRSYKFDRYKTRKSEENGEPKHAAKITICVADTHSARKAFEVAEAVADGVIQARNLVNEPANILGPVEFAEEAEKLEKLGVKVEVLGEKELKKLGMGALLGVAQGSVRPPRLVVMEWHGAKGKEKPIAFVGKGVVFDTGGISIKPAANMEDMKGDMGGAAAVTGLMRALAGRKAKVNAIGVIGLVENMPDGNAQRPGDIVTSMSGQTIEVINTDAEGRLVLADALHYTNDRFKPRFIINLATLTGAVMVALGQYHAGLFSNDDELADQLYDAGQSTGEKLWRLPLGTEYDKMIDSKFADMKNSAGRYGGSITAAQFLKRFVGETPWAHLDVAGTAMGSPANEYNQSWASGFGVRLLDRLVRDQFES.

The Mn(2+) site is built by Lys263 and Asp268. Residue Lys275 is part of the active site. Positions 286, 345, and 347 each coordinate Mn(2+). Arg349 is a catalytic residue.

It belongs to the peptidase M17 family. Mn(2+) is required as a cofactor.

It is found in the cytoplasm. The enzyme catalyses Release of an N-terminal amino acid, Xaa-|-Yaa-, in which Xaa is preferably Leu, but may be other amino acids including Pro although not Arg or Lys, and Yaa may be Pro. Amino acid amides and methyl esters are also readily hydrolyzed, but rates on arylamides are exceedingly low.. It carries out the reaction Release of an N-terminal amino acid, preferentially leucine, but not glutamic or aspartic acids.. Functionally, presumably involved in the processing and regular turnover of intracellular proteins. Catalyzes the removal of unsubstituted N-terminal amino acids from various peptides. This chain is Probable cytosol aminopeptidase, found in Brucella ovis (strain ATCC 25840 / 63/290 / NCTC 10512).